The sequence spans 249 residues: Uridylate kinase (249 aa).

13–16 (KLSG) contacts ATP. A UMP-binding site is contributed by G55. Positions 56 and 60 each coordinate ATP. Residues D75 and 136–143 (IGNPFFTT) each bind UMP. Residues T163, F169, and D172 each contribute to the ATP site.

This sequence belongs to the UMP kinase family. As to quaternary structure, homohexamer.

The protein resides in the cytoplasm. The enzyme catalyses UMP + ATP = UDP + ADP. Its pathway is pyrimidine metabolism; CTP biosynthesis via de novo pathway; UDP from UMP (UMPK route): step 1/1. Inhibited by UTP. Catalyzes the reversible phosphorylation of UMP to UDP. The chain is Uridylate kinase from Baumannia cicadellinicola subsp. Homalodisca coagulata.